Here is a 1145-residue protein sequence, read N- to C-terminus: DNA polymerase subunit gamma-1, mitochondrial (1145 aa).

Residues 1–9 (MQFHLIRKY) constitute a mitochondrion transit peptide.

Belongs to the DNA polymerase type-A family. Component of the DNA polymerase gamma complex consisting of two subunits: the catalytic subunit DNApol-gamma/DNApolG1 and the accessory subunit PolG2/DNApol-gamma35. Mg(2+) is required as a cofactor.

The protein resides in the mitochondrion. The catalysed reaction is DNA(n) + a 2'-deoxyribonucleoside 5'-triphosphate = DNA(n+1) + diphosphate. With respect to regulation, stimulated by KCl, and inhibited by the small molecules o 2',3'-dideoxythymidine 5'-triphosphate (d2TTP) and N-ethylmaleimide (NEM). Its function is as follows. As the catalytic component of the DNA polymerase gamma complex is involved in the replication of mitochondrial DNA (mtDNA). Has both 5'-3' DNA polymerase and a highly mispair-specific 3'-5' exonuclease activity. At the end of mtDNA replication DNA ends are ligated to produce a closed circular mtDNA molecule, its exonuclease activity is required for formation of these ligatable ends by preventing DNA synthesis from continuing past the 5'-end of downstream DNA into duplex DNA regions. Does not possess DNA primase activity, does not catalyze strand displacement synthesis and does not contain a 5'-3' exonuclease activity to catalyze nick translation. Important for promoting the elimination of paternal mitochondrial DNA during spermatogenesis, however its exact role in this function has not yet been identified and appears to be independent of its 3'-5'-exonuclease activity and only partially dependent on its DNA polymerase activity. This chain is DNA polymerase subunit gamma-1, mitochondrial, found in Drosophila melanogaster (Fruit fly).